The chain runs to 208 residues: Ribosomal RNA small subunit methyltransferase G (208 aa).

S-adenosyl-L-methionine is bound by residues G73, L78, 124–125 (VE), and R139.

The protein belongs to the methyltransferase superfamily. RNA methyltransferase RsmG family.

The protein resides in the cytoplasm. It carries out the reaction guanosine(527) in 16S rRNA + S-adenosyl-L-methionine = N(7)-methylguanosine(527) in 16S rRNA + S-adenosyl-L-homocysteine. Its function is as follows. Specifically methylates the N7 position of guanine in position 527 of 16S rRNA. The polypeptide is Ribosomal RNA small subunit methyltransferase G (Aeromonas salmonicida (strain A449)).